Here is a 239-residue protein sequence, read N- to C-terminus: Ribosomal RNA small subunit methyltransferase G (239 aa).

Residues Gly77, Phe82, 128–129, and Arg147 each bind S-adenosyl-L-methionine; that span reads AE.

The protein belongs to the methyltransferase superfamily. RNA methyltransferase RsmG family.

Its subcellular location is the cytoplasm. Its function is as follows. Specifically methylates the N7 position of guanine in position 535 of 16S rRNA. The sequence is that of Ribosomal RNA small subunit methyltransferase G from Bacillus anthracis (strain A0248).